Reading from the N-terminus, the 534-residue chain is uncharacterized protein (534 aa).

4 disordered regions span residues 1–93 (MSSS…DDTG), 123–260 (SPES…LSSA), 313–349 (AAAT…TFPS), and 383–505 (PWGA…QGCP). Residues 35–45 (GPGPDPGPEPG) show a composition bias toward pro residues. A phosphoserine mark is found at serine 87 and serine 123. Residues 145 to 161 (RGAAAQRCGEAARAEAG) are compositionally biased toward low complexity. The segment covering 230–239 (SPKDPRDTPR) has biased composition (basic and acidic residues).

This is an uncharacterized protein from Bos taurus (Bovine).